Here is a 114-residue protein sequence, read N- to C-terminus: UPF0145 protein PF1756 (114 aa).

It belongs to the UPF0145 family.

This chain is UPF0145 protein PF1756, found in Pyrococcus furiosus (strain ATCC 43587 / DSM 3638 / JCM 8422 / Vc1).